Consider the following 481-residue polypeptide: Aspartyl/glutamyl-tRNA(Asn/Gln) amidotransferase subunit B (481 aa).

This sequence belongs to the GatB/GatE family. GatB subfamily. Heterotrimer of A, B and C subunits.

The catalysed reaction is L-glutamyl-tRNA(Gln) + L-glutamine + ATP + H2O = L-glutaminyl-tRNA(Gln) + L-glutamate + ADP + phosphate + H(+). The enzyme catalyses L-aspartyl-tRNA(Asn) + L-glutamine + ATP + H2O = L-asparaginyl-tRNA(Asn) + L-glutamate + ADP + phosphate + 2 H(+). Functionally, allows the formation of correctly charged Asn-tRNA(Asn) or Gln-tRNA(Gln) through the transamidation of misacylated Asp-tRNA(Asn) or Glu-tRNA(Gln) in organisms which lack either or both of asparaginyl-tRNA or glutaminyl-tRNA synthetases. The reaction takes place in the presence of glutamine and ATP through an activated phospho-Asp-tRNA(Asn) or phospho-Glu-tRNA(Gln). The chain is Aspartyl/glutamyl-tRNA(Asn/Gln) amidotransferase subunit B from Ectopseudomonas mendocina (strain ymp) (Pseudomonas mendocina).